Here is a 477-residue protein sequence, read N- to C-terminus: Bifunctional protein HldE (477 aa).

A ribokinase region spans residues 1–318; that stretch reads MKVTLPEFER…ENAVRGRADT (318 aa). The residue at position 179 (lysine 179) is an N6-acetyllysine. An ATP-binding site is contributed by 195 to 198; it reads NLSE. Aspartate 264 is a catalytic residue. Residues 344 to 477 form a cytidylyltransferase region; that stretch reads MTNGVFDILH…IKKIQQDKKG (134 aa).

It in the N-terminal section; belongs to the carbohydrate kinase PfkB family. This sequence in the C-terminal section; belongs to the cytidylyltransferase family. In terms of assembly, homodimer.

The catalysed reaction is D-glycero-beta-D-manno-heptose 7-phosphate + ATP = D-glycero-beta-D-manno-heptose 1,7-bisphosphate + ADP + H(+). It carries out the reaction D-glycero-beta-D-manno-heptose 1-phosphate + ATP + H(+) = ADP-D-glycero-beta-D-manno-heptose + diphosphate. It participates in nucleotide-sugar biosynthesis; ADP-L-glycero-beta-D-manno-heptose biosynthesis; ADP-L-glycero-beta-D-manno-heptose from D-glycero-beta-D-manno-heptose 7-phosphate: step 1/4. The protein operates within nucleotide-sugar biosynthesis; ADP-L-glycero-beta-D-manno-heptose biosynthesis; ADP-L-glycero-beta-D-manno-heptose from D-glycero-beta-D-manno-heptose 7-phosphate: step 3/4. Catalyzes the phosphorylation of D-glycero-D-manno-heptose 7-phosphate at the C-1 position to selectively form D-glycero-beta-D-manno-heptose-1,7-bisphosphate. In terms of biological role, catalyzes the ADP transfer from ATP to D-glycero-beta-D-manno-heptose 1-phosphate, yielding ADP-D-glycero-beta-D-manno-heptose. In Escherichia coli (strain 55989 / EAEC), this protein is Bifunctional protein HldE.